The sequence spans 506 residues: Maturase K (506 aa).

This sequence belongs to the intron maturase 2 family. MatK subfamily.

It localises to the plastid. It is found in the chloroplast. Usually encoded in the trnK tRNA gene intron. Probably assists in splicing its own and other chloroplast group II introns. The polypeptide is Maturase K (Rhododendron ferrugineum (Alpenrose)).